Here is a 789-residue protein sequence, read N- to C-terminus: uncharacterized protein (789 aa).

Disordered stretches follow at residues 107-326, 426-491, 523-625, 666-751, and 765-789; these read YQQD…NNNN, MLKS…NNNN, SVNF…ISNN, THTF…KGNN, and PTRFNNKNNNNSNGFTSNKRFYNQH. Positions 113 to 123 are enriched in acidic residues; it reads NNTDDEQEQEQ. Composition is skewed to low complexity over residues 124–141, 151–194, 201–213, and 225–270; these read EQQQKQNEIINKITTPIK, TSQT…ITPI, SISTSSSKQLRSS, and TSST…THNS. Acidic residues predominate over residues 274–290; that stretch reads IDDDDGDNNDEINDEND. Low complexity-rich tracts occupy residues 291 to 326 and 429 to 491; these read INSNNLTFSSSTKSKKINNNNNSIDSNNTNINNNNN and SNNS…NNNN. Residues 523–549 show a composition bias toward polar residues; that stretch reads SVNFDRNQNQKSPFLNNTSMPNINFNE. Low complexity-rich tracts occupy residues 550–581, 602–617, 696–722, and 766–789; these read QSQQQSQNQYYQQQQQQQQQQSNNSMNQSINY, TSGSSLKYSTSSNNSK, HIMNSMNSNFNHHHNNNNQLFNNSGSN, and TRFNNKNNNNSNGFTSNKRFYNQH.

This is an uncharacterized protein from Dictyostelium discoideum (Social amoeba).